We begin with the raw amino-acid sequence, 526 residues long: Peptide chain release factor 3 (526 aa).

Residues 9–277 (DKRRTFAIIS…GIVEWAPVPQ (269 aa)) enclose the tr-type G domain. GTP contacts are provided by residues 18–25 (SHPDAGKT), 86–90 (DTPGH), and 140–143 (NKLD).

It belongs to the TRAFAC class translation factor GTPase superfamily. Classic translation factor GTPase family. PrfC subfamily.

The protein localises to the cytoplasm. Functionally, increases the formation of ribosomal termination complexes and stimulates activities of RF-1 and RF-2. It binds guanine nucleotides and has strong preference for UGA stop codons. It may interact directly with the ribosome. The stimulation of RF-1 and RF-2 is significantly reduced by GTP and GDP, but not by GMP. This chain is Peptide chain release factor 3, found in Shewanella pealeana (strain ATCC 700345 / ANG-SQ1).